A 309-amino-acid polypeptide reads, in one-letter code: NAD kinase (309 aa).

Aspartate 89 functions as the Proton acceptor in the catalytic mechanism. NAD(+) contacts are provided by residues 89–90 (DG), 163–164 (NE), histidine 174, arginine 191, aspartate 193, and 204–209 (TAYSLS).

The protein belongs to the NAD kinase family. A divalent metal cation is required as a cofactor.

Its subcellular location is the cytoplasm. The enzyme catalyses NAD(+) + ATP = ADP + NADP(+) + H(+). In terms of biological role, involved in the regulation of the intracellular balance of NAD and NADP, and is a key enzyme in the biosynthesis of NADP. Catalyzes specifically the phosphorylation on 2'-hydroxyl of the adenosine moiety of NAD to yield NADP. In Shewanella denitrificans (strain OS217 / ATCC BAA-1090 / DSM 15013), this protein is NAD kinase.